The sequence spans 2278 residues: MRGHQFKSWIFELREILREIKNSHHFLDSWTQFNSVGSFIHIFFHQERFLKLFDPRIWSILLSRNSQGSTSNRYFTIKGVILFVVAVLIYRINNRNMVERKNLYLIGLLPIPMNSIGPRNDTLEESVGSSNINRLIVSLLYLPKGKKISESCFLNPKESTWVLPITKKCSMPESNWGSRWWRNWIGKKRDSSCKISNETVAGIEILFKEKDLKYLEFLFVYYMDDPIRKDHDWELFDRLSLRKSRNRINLNSGPLFEILVKHWISYLMSAFREKIPIEVEGFFKQQGAGSTIQSNDIEHVSHLFSRNKWAISLQNCAQFHMWQFRQDLFVSWGKNPPESDFLRNVSRENWIWLDNVWLVNKDRFFSKVQNVSSNIQYDSTRSSFVQVTDSSQLKGSSDQSRDHLDSISNEDSEYHTLINQREIQQRKERSILWDPSFLQTERKEIESGRFPKCLSGYSSMSRLFTEREKQMINHLFPEEIEEFLGNPTRSVRSFFSDRWSELHLGSNPTERSTRDQKLLKKQQDLSFVPSRRSEKKEMVNIFKIITYLQNTVSIHPISSDPGCDMVPKDEPDMDSSNKISFLNKNPFFDLFHLFHDRNRGGYTLHYDFASEERFQEMADLFTLSITEPDLVYHKGFAFSIDSCGLDQKQFLNEARDESKKKSLLVLPPIFYEENESFSRRIRKKWVRISCGNDLEDPKPKIVVFASNNIMEAVTQYRLIRNLIQIQYSTYGYIRNVLNRFFLMNRSDRNFEYGIQRDQIGKDTLNHRTIMKYTINQYLSNLKKSQKKWFEPLILISRTERSMNRDPDAYRYKWSNGSKSFQEHLEQSVSEQKSRFQVVFDRLRINQYSIDWSEVIDKKDLSKSLRFFLSKSLLFLSKLLLFLSNSLPFFCVSFGNIPIHRSEIYIYEELKGPNDQLCNQLLESIGLQIVHLKKLKPFLLDDHDTSQKSKFLINGGTISPFLFNKIPKWMIDSFHTRNNRRKSFDNPDSYFSMIFHDQDNWLNPVKPFHRSSLISSFYKANRLRFLNNPHHFCFYWNTRFPFSVEKARINNSDFTYGQFLNILFIRNKIFSLCVGKKKHAFWGRDTISPIESQVSNIFIPNDFPQSGDETYNLYKSFHFPSRSDPFVRRAIYSIADISGTPLTEGQIVNFERTYCQPLSDMNLSDSEGKNLHQYLNFNSNMGLIHTPCSEKDLSSEKRKKWSLCLKKCVEKGQMYRTFQRDSAFSTLSKWNLFQTYMPWFLTSTGYKYLNLIFLDTFSDLLPILSSSQKFVSIFPDIMHGSGISWRILQKKLCLPQWNLISEISSKCLHNLLLSEEMIHRNNESPLISTHLRSPNAREFLYSILFLLLVAGYLVRTHLLFVSRASSELQTEFEKVKSLMIPSSMIELRKLLDRYPTSEPNSFWLKNLFLVALEQLGDSLEEIRGSASGGNMLGPAYGVKSIRSKKKDWNINLIEIIDLIPNPINRITFSRNTRHLSHTSKEIYSLIRKRKNVNGDWIDEKIESWVANSDSIDDEEREFLVQFSTLTTENRIDQILLSLTHSDHLSKNDSGYQMIEQPGAIYLRYLVDIHKKHLMNYEFNPSCLAERRIFLAHYQTITYSQTSCGENSFHFPSPGKPFSLRLALSPSRGILVIGSIGTGRSYLVKYLATNSYVPFITVFLNKFLDNKSKGFLLDEIDIDDSDDIDDSDNLDASDDIDRDLDTELELLTRMNGLTVDMMPEIDRFYITLQFELAKAMSPCIIWIPNIHDLDVNESNDLSLGLLVNHLSRDCERCSTRNILVIASTHIPQKVDPALIAPNKLNTCIKIRRLLIPQQRKHFFTLSYTRGFHLEKKMFHTNGFGSITMGSNARDLVALTNEVLSISITQKKSIIDTNTIRSALHRQTWDLRSQVRSVQDHGILFYQIGRAVAQNVLLSNCPIDPISIYMKKKSCNEGDSYLYKWYFELGTSMKRLTILLYLLSCSAGSVAQDLWSLSVPDEKNGITSYGLVENDSDLVHGLLEVEGALVGSSRTEKDCSQFDNDRVTLLLRPEPRNPLDMMQKGSWSILDQRFLYEKYESEFEEGEGEGALDPQEDLFNHIVWAPRIWRPWGFLFDCIERPNELGFPYWSRSFRGKRIIYDEEDELQENDSGFLQSGTMQYQTRDRSQGLFRISQFIWDPADPLFFLFKDQPPGSVFSHRELFADEEMSKGLLTSQTDPPTSIYKRWFIKNTQEKHFELLINRQRWLRTNSSLSNGSFRSNTLSESYQYLSNLFLSNGTLLDQMPKTLLRKRWLFPDEMKIGFM.

1632-1639 contributes to the ATP binding site; sequence GSIGTGRS.

The protein belongs to the Ycf2 family.

The protein resides in the plastid. The protein localises to the chloroplast stroma. Probable ATPase of unknown function. Its presence in a non-photosynthetic plant (Epifagus virginiana) and experiments in tobacco indicate that it has an essential function which is probably not related to photosynthesis. The chain is Protein Ycf2 from Solanum tuberosum (Potato).